A 341-amino-acid chain; its full sequence is Methionine import ATP-binding protein MetN 3 (341 aa).

The region spanning 2-241 (IEFQNVTKTF…PSHETTKRFI (240 aa)) is the ABC transporter domain. Residue 38-45 (GFSGAGKS) participates in ATP binding.

Belongs to the ABC transporter superfamily. Methionine importer (TC 3.A.1.24) family. In terms of assembly, the complex is composed of two ATP-binding proteins (MetN), two transmembrane proteins (MetI) and a solute-binding protein (MetQ).

The protein localises to the cell membrane. The catalysed reaction is L-methionine(out) + ATP + H2O = L-methionine(in) + ADP + phosphate + H(+). The enzyme catalyses D-methionine(out) + ATP + H2O = D-methionine(in) + ADP + phosphate + H(+). In terms of biological role, part of the ABC transporter complex MetNIQ involved in methionine import. Responsible for energy coupling to the transport system. The protein is Methionine import ATP-binding protein MetN 3 of Oceanobacillus iheyensis (strain DSM 14371 / CIP 107618 / JCM 11309 / KCTC 3954 / HTE831).